Reading from the N-terminus, the 400-residue chain is Imidazolonepropionase (400 aa).

Fe(3+) contacts are provided by His70 and His72. Residues His70 and His72 each coordinate Zn(2+). 4-imidazolone-5-propanoate is bound by residues Arg79, Tyr142, and His175. Tyr142 contacts N-formimidoyl-L-glutamate. Fe(3+) is bound at residue His239. His239 contributes to the Zn(2+) binding site. Gln242 is a 4-imidazolone-5-propanoate binding site. Asp314 lines the Fe(3+) pocket. Residue Asp314 participates in Zn(2+) binding. N-formimidoyl-L-glutamate contacts are provided by Asn316 and Gly318. Residue Thr319 coordinates 4-imidazolone-5-propanoate.

Belongs to the metallo-dependent hydrolases superfamily. HutI family. Zn(2+) serves as cofactor. It depends on Fe(3+) as a cofactor.

Its subcellular location is the cytoplasm. It carries out the reaction 4-imidazolone-5-propanoate + H2O = N-formimidoyl-L-glutamate. Its pathway is amino-acid degradation; L-histidine degradation into L-glutamate; N-formimidoyl-L-glutamate from L-histidine: step 3/3. Its function is as follows. Catalyzes the hydrolytic cleavage of the carbon-nitrogen bond in imidazolone-5-propanoate to yield N-formimidoyl-L-glutamate. It is the third step in the universal histidine degradation pathway. The protein is Imidazolonepropionase of Methylobacterium sp. (strain 4-46).